A 599-amino-acid chain; its full sequence is Putative sensor histidine kinase NtrY-like (599 aa).

4 helical membrane-spanning segments follow: residues 17-37, 44-64, 85-105, and 285-305; these read VLIF…FYVI, FSTI…LGVV, IVIA…VFSV, and IMFI…GVIF. Residues 307–361 enclose the HAMP domain; sequence AKIVKPIKKLVTATDNVKDGDLTVQVPENEVDKDEIGTLYVAFNRMIKQLSRQQR. The Histidine kinase domain occupies 378-589; that stretch reads KVAHEIKNPL…IIDIKFDLKE (212 aa). His-381 is modified (phosphohistidine; by autocatalysis).

Its subcellular location is the cell membrane. The catalysed reaction is ATP + protein L-histidine = ADP + protein N-phospho-L-histidine.. Functionally, member of the two-component regulatory system RC0948/RC0849. This Rickettsia conorii (strain ATCC VR-613 / Malish 7) protein is Putative sensor histidine kinase NtrY-like.